Reading from the N-terminus, the 299-residue chain is Oxygen-dependent coproporphyrinogen-III oxidase (299 aa).

Ser-92 is a substrate binding site. Residues His-96 and His-106 each contribute to the Mn(2+) site. The active-site Proton donor is His-106. 108–110 (NVR) contacts substrate. Residues His-145 and His-175 each coordinate Mn(2+). Positions 240–275 (YVEFNLVWDRGTLFGLQTGGRTESILMSMPPLVRWE) are important for dimerization. Residue 258 to 260 (GGR) coordinates substrate.

It belongs to the aerobic coproporphyrinogen-III oxidase family. Homodimer. Mn(2+) serves as cofactor.

Its subcellular location is the cytoplasm. It catalyses the reaction coproporphyrinogen III + O2 + 2 H(+) = protoporphyrinogen IX + 2 CO2 + 2 H2O. Its pathway is porphyrin-containing compound metabolism; protoporphyrin-IX biosynthesis; protoporphyrinogen-IX from coproporphyrinogen-III (O2 route): step 1/1. Functionally, involved in the heme biosynthesis. Catalyzes the aerobic oxidative decarboxylation of propionate groups of rings A and B of coproporphyrinogen-III to yield the vinyl groups in protoporphyrinogen-IX. The sequence is that of Oxygen-dependent coproporphyrinogen-III oxidase from Escherichia coli O8 (strain IAI1).